Consider the following 146-residue polypeptide: D-aminoacyl-tRNA deacylase (146 aa).

A Gly-cisPro motif, important for rejection of L-amino acids motif is present at residues 137–138 (GP).

It belongs to the DTD family. In terms of assembly, homodimer.

It is found in the cytoplasm. The catalysed reaction is glycyl-tRNA(Ala) + H2O = tRNA(Ala) + glycine + H(+). It catalyses the reaction a D-aminoacyl-tRNA + H2O = a tRNA + a D-alpha-amino acid + H(+). In terms of biological role, an aminoacyl-tRNA editing enzyme that deacylates mischarged D-aminoacyl-tRNAs. Also deacylates mischarged glycyl-tRNA(Ala), protecting cells against glycine mischarging by AlaRS. Acts via tRNA-based rather than protein-based catalysis; rejects L-amino acids rather than detecting D-amino acids in the active site. By recycling D-aminoacyl-tRNA to D-amino acids and free tRNA molecules, this enzyme counteracts the toxicity associated with the formation of D-aminoacyl-tRNA entities in vivo and helps enforce protein L-homochirality. This is D-aminoacyl-tRNA deacylase from Shouchella clausii (strain KSM-K16) (Alkalihalobacillus clausii).